A 397-amino-acid polypeptide reads, in one-letter code: uncharacterized protein (397 aa).

Residues Ser115 and Ser141 each carry the phosphoserine modification. Residues 135–156 (NSLNHDSPPHTPARRSDNSTSK) are disordered. Lys239 is covalently cross-linked (Glycyl lysine isopeptide (Lys-Gly) (interchain with G-Cter in SUMO2)). A phosphoserine mark is found at Ser269 and Ser296. The disordered stretch occupies residues 289–316 (GRGPTKASPQPALTVKAKATSSATTLAS). Residues 300–316 (ALTVKAKATSSATTLAS) show a composition bias toward low complexity. Position 342 is a phosphoserine (Ser342). Positions 354 to 397 (SEAQDSQVTSTKSPTVRCIVPDPPAPLASQRPPRRRWRRTCKDC) are disordered. The segment covering 356-367 (AQDSQVTSTKSP) has biased composition (polar residues). A compositionally biased stretch (basic residues) spans 385 to 397 (PPRRRWRRTCKDC).

This is an uncharacterized protein from Rattus norvegicus (Rat).